A 26-amino-acid chain; its full sequence is Peroxidase 1 (26 aa).

Residue Asp-15 coordinates Ca(2+).

This sequence belongs to the peroxidase family. Classical plant (class III) peroxidase subfamily. Heme b serves as cofactor. Requires Ca(2+) as cofactor.

It is found in the secreted. It carries out the reaction 2 a phenolic donor + H2O2 = 2 a phenolic radical donor + 2 H2O. Its function is as follows. Removal of H(2)O(2), oxidation of toxic reductants, biosynthesis and degradation of lignin, suberization, auxin catabolism, response to environmental stresses such as wounding, pathogen attack and oxidative stress. These functions might be dependent on each isozyme/isoform in each plant tissue. In Vitis vinifera (Grape), this protein is Peroxidase 1.